Here is a 219-residue protein sequence, read N- to C-terminus: Ribonuclease HII (219 aa).

Positions 30-219 (RVIAGIDEAG…VREHVTCPSS (190 aa)) constitute an RNase H type-2 domain. The a divalent metal cation site is built by D36, E37, and D128.

The protein belongs to the RNase HII family. Mn(2+) serves as cofactor. Mg(2+) is required as a cofactor.

It is found in the cytoplasm. The enzyme catalyses Endonucleolytic cleavage to 5'-phosphomonoester.. Functionally, endonuclease that specifically degrades the RNA of RNA-DNA hybrids. The chain is Ribonuclease HII from Pelobacter propionicus (strain DSM 2379 / NBRC 103807 / OttBd1).